A 209-amino-acid chain; its full sequence is TVP38/TMEM64 family membrane protein slr0305 (209 aa).

The next 5 membrane-spanning stretches (helical) occupy residues 15–35 (LGTW…VVFL), 39–59 (ILTL…YVFI), 110–130 (LSPV…NVSL), 134–154 (VIGS…GSLA), and 171–191 (LQWT…IYVT).

It belongs to the TVP38/TMEM64 family.

It localises to the cell membrane. The chain is TVP38/TMEM64 family membrane protein slr0305 from Synechocystis sp. (strain ATCC 27184 / PCC 6803 / Kazusa).